We begin with the raw amino-acid sequence, 609 residues long: Grainyhead-like protein 1 homolog (609 aa).

Positions 1–91 are transcription activation; the sequence is MTQDYDNKRP…EHDHADHEHS (91 aa). A disordered region spans residues 183 to 207; that stretch reads SDHFTSNNQPPNSQRRTPDSTFSET. A compositionally biased stretch (polar residues) spans 185–206; it reads HFTSNNQPPNSQRRTPDSTFSE. A Grh/CP2 DB domain is found at 239–465; it reads AGNNFEYTLE…DLDTQPVLFI (227 aa). 2 interaction with DNA regions span residues 371–380 and 418–421; these read TDFSSQKGVK and RKIR.

This sequence belongs to the grh/CP2 family. Grainyhead subfamily. Binds DNA as homodimer.

Its subcellular location is the nucleus. Functionally, transcription factor involved in epithelial development. Binds directly to the consensus DNA sequence 5'-AACCGGTT-3' and modulates expression of epidermal-specific genes, including XK81A1. Important regulator of DSG1 in the context of epidermal differentiation. Regulates the maintenance of skin barrier. No genetic interaction with GRHL3, nor functional cooperativity due to diverse target gene selectivity during epithelia development. Functions downstream of BMP-signaling cascade modulating endogenous bmp4-responsive targets. The sequence is that of Grainyhead-like protein 1 homolog from Xenopus laevis (African clawed frog).